Here is a 140-residue protein sequence, read N- to C-terminus: Large ribosomal subunit protein uL14 (140 aa).

The protein belongs to the universal ribosomal protein uL14 family. In terms of assembly, component of the large ribosomal subunit.

Its subcellular location is the cytoplasm. Functionally, component of the large ribosomal subunit. The ribosome is a large ribonucleoprotein complex responsible for the synthesis of proteins in the cell. The polypeptide is Large ribosomal subunit protein uL14 (rpl23) (Ictalurus punctatus (Channel catfish)).